The sequence spans 348 residues: Protein pelota homolog (348 aa).

The protein belongs to the eukaryotic release factor 1 family. Pelota subfamily. In terms of assembly, monomer. The cofactor is a divalent metal cation.

It is found in the cytoplasm. Its function is as follows. May function in recognizing stalled ribosomes, interact with stem-loop structures in stalled mRNA molecules, and effect endonucleolytic cleavage of the mRNA. May play a role in the release non-functional ribosomes and degradation of damaged mRNAs. Has endoribonuclease activity. This Methanococcus aeolicus (strain ATCC BAA-1280 / DSM 17508 / OCM 812 / Nankai-3) protein is Protein pelota homolog.